The primary structure comprises 637 residues: Chaperone protein HtpG (637 aa).

The interval 1–335 (MQGTVNSERL…SSDLPLNISR (335 aa)) is a; substrate-binding. Residues 336–559 (ETLQNNKIIE…DGSMDIRMER (224 aa)) are b. The tract at residues 560–637 (FLREQKQLNY…RMNSVLSQIN (78 aa)) is c.

The protein belongs to the heat shock protein 90 family. Homodimer.

The protein resides in the cytoplasm. Its function is as follows. Molecular chaperone. Has ATPase activity. This chain is Chaperone protein HtpG, found in Ehrlichia ruminantium (strain Gardel).